Here is a 1193-residue protein sequence, read N- to C-terminus: uncharacterized protein (1193 aa).

A signal peptide spans 1-25 (MKIKFINYLLLFFIIFLNYNGFVKS). The Extracellular segment spans residues 26-1172 (DCYQELDLVL…PQDPSDELST (1147 aa)). 18 N-linked (GlcNAc...) asparagine glycosylation sites follow: N90, N183, N226, N265, N281, N345, N357, N436, N516, N552, N583, N627, N712, N765, N822, N938, N1038, and N1092. Residues 1173–1193 (SSFVQVNLLFLSILIFTIFIF) form a helical membrane-spanning segment.

The protein localises to the membrane. This is an uncharacterized protein from Dictyostelium discoideum (Social amoeba).